A 1242-amino-acid polypeptide reads, in one-letter code: ATP-dependent helicase/nuclease subunit A (1242 aa).

Residues 12 to 487 (SRWTDEQWKA…IDLASNFRSR (476 aa)) enclose the UvrD-like helicase ATP-binding domain. 33-40 (AAAGSGKT) lines the ATP pocket. The UvrD-like helicase C-terminal domain maps to 514 to 808 (AAQLKYGADY…RIMTIHSSKG (295 aa)).

The protein belongs to the helicase family. AddA subfamily. In terms of assembly, heterodimer of AddA and AddB/RexB. Requires Mg(2+) as cofactor.

It catalyses the reaction Couples ATP hydrolysis with the unwinding of duplex DNA by translocating in the 3'-5' direction.. It carries out the reaction ATP + H2O = ADP + phosphate + H(+). Its function is as follows. The heterodimer acts as both an ATP-dependent DNA helicase and an ATP-dependent, dual-direction single-stranded exonuclease. Recognizes the chi site generating a DNA molecule suitable for the initiation of homologous recombination. The AddA nuclease domain is required for chi fragment generation; this subunit has the helicase and 3' -&gt; 5' nuclease activities. This is ATP-dependent helicase/nuclease subunit A from Geobacillus kaustophilus (strain HTA426).